Here is a 91-residue protein sequence, read N- to C-terminus: Large ribosomal subunit protein uL23c (91 aa).

The protein belongs to the universal ribosomal protein uL23 family. As to quaternary structure, part of the 50S ribosomal subunit.

The protein resides in the plastid. It localises to the chloroplast. Functionally, binds to 23S rRNA. In Anthoceros angustus (Hornwort), this protein is Large ribosomal subunit protein uL23c (rpl23).